Reading from the N-terminus, the 288-residue chain is Syntaxin-1B (288 aa).

A compositionally biased stretch (basic and acidic residues) spans M1–D13. The disordered stretch occupies residues M1 to V20. The Cytoplasmic segment spans residues M1–K264. S10 and S14 each carry phosphoserine. A coiled-coil region spans residues M29–G104. In terms of domain architecture, t-SNARE coiled-coil homology spans L191 to A253. The helical; Anchor for type IV membrane protein transmembrane segment at I265–L288 threads the bilayer.

The protein belongs to the syntaxin family. Interacts with OTOF. Interacts with SYT6 and SYT8; the interaction is Ca(2+)-dependent. Post-translationally, phosphorylated by CK2.

It is found in the membrane. It localises to the nucleus. Its subcellular location is the cytoplasm. The protein resides in the cytoskeleton. The protein localises to the microtubule organizing center. It is found in the centrosome. It localises to the spindle. Potentially involved in docking of synaptic vesicles at presynaptic active zones. May mediate Ca(2+)-regulation of exocytosis acrosomal reaction in sperm. This is Syntaxin-1B (STX1B) from Homo sapiens (Human).